The following is a 1075-amino-acid chain: Error-prone DNA polymerase (1075 aa).

The protein belongs to the DNA polymerase type-C family. DnaE2 subfamily.

The protein resides in the cytoplasm. The enzyme catalyses DNA(n) + a 2'-deoxyribonucleoside 5'-triphosphate = DNA(n+1) + diphosphate. DNA polymerase involved in damage-induced mutagenesis and translesion synthesis (TLS). It is not the major replicative DNA polymerase. The sequence is that of Error-prone DNA polymerase from Ralstonia nicotianae (strain ATCC BAA-1114 / GMI1000) (Ralstonia solanacearum).